The following is a 408-amino-acid chain: MDKLLERFLNYVSLDTQSKAGVRQVPSTEGQWKLLHLLKEQLEEMGLINVTLSEKGTLMATLPANVPGDIPAIGFISHVDTSPDCSGKNVNPQIVENYRGGDIALGIGDEVLSPVMFPVLHQLLGQTLITTDGKTLLGADDKAGIAEIMTALAVLQQKNIPHGDIRVAFTPDEEVGKGAKHFDVDAFDARWAYTVDGGGVGELEFENFNAASVNIKIVGNNVHPGTAKGVMVNALSLAARIHAEVPADESPEMTEGYEGFYHLASMKGTVERADMHYIIRDFDRKQFEARKRKMMEIAKKVGKGLHPDCYIELVIEDSYYNMREKVVEHPHILDIAQQAMRDCDIEPELKPIRGGTDGAQLSFMGLPCPNLFTGGYNYHGKHEFVILEGMEKAVQVIVRIAELTAQRK.

Residue H78 coordinates Zn(2+). Residue D80 is part of the active site. D140 is a binding site for Zn(2+). E173 serves as the catalytic Proton acceptor. Positions 174, 196, and 379 each coordinate Zn(2+).

It belongs to the peptidase M20B family. Zn(2+) is required as a cofactor.

It is found in the cytoplasm. It carries out the reaction Release of the N-terminal residue from a tripeptide.. Functionally, cleaves the N-terminal amino acid of tripeptides. This Shigella flexneri serotype 5b (strain 8401) protein is Peptidase T.